A 152-amino-acid chain; its full sequence is MVHATSPLLLLLLLSLALVAPGLSARKCSLTGKWTNDLGSNMTIGAVNSRGEFTGTYITAVTATSNEIKESPLHGTQNTINKRTQPTFGFTVNWKFSESTTVFTGQCFIDRNGKEVLKTMWLLRSSVNDIGDDWKATRVGINIFTRLRTQKE.

Positions 1-24 (MVHATSPLLLLLLLSLALVAPGLS) are cleaved as a signal peptide. An Avidin-like domain is found at 26 to 149 (RKCSLTGKWT…GINIFTRLRT (124 aa)). An intrachain disulfide couples Cys28 to Cys107. The N-linked (GlcNAc...) asparagine glycan is linked to Asn41. Residue Tyr57 coordinates biotin.

It belongs to the avidin/streptavidin family. Homotetramer. Post-translationally, N-linked glycan at Asn-41 consists of GlcNAc(beta1-2)Man(alpha1-3)[GlcNAc(beta1-4)][Man(alpha1-?)Man(alpha1-6)] Man(beta1-4)GlcNAc(beta1-4)GlcNAc. As to expression, synthesized in hen oviduct and concentrated in egg white (where it represents 0.05% of the total protein).

It localises to the secreted. The biological function of avidin is not known. Forms a strong non-covalent specific complex with biotin (one molecule of biotin per subunit of avidin). This chain is Avidin (AVD), found in Gallus gallus (Chicken).